The sequence spans 613 residues: Pentatricopeptide repeat-containing protein At2g45350, chloroplastic (613 aa).

13 PPR repeats span residues 85–119, 120–154, 155–185, 186–216, 219–250, 251–285, 286–312, 313–347, 349–383, 384–414, 415–449, 450–480, and 486–516; these read DPFLWNAVIKSHSHGKDPRQALLLLCLMLENGVSV, DKFSLSLVLKACSRLGFVKGGMQIHGFLKKTGLWS, DLFLQNCLIGLYLKCGCLGLSRQMFDRMPKR, DSVSYNSMIDGYVKCGLIVSARELFDLMPME, NLISWNSMISGYAQTSDGVDIASKLFADMPEK, DLISWNSMIDGYVKHGRIEDAKGLFDVMPRRDVVT, WATMIDGYAKLGFVHHAKTLFDQMPHR, DVVAYNSMMAGYVQNKYHMEALEIFSDMEKESHLL, DDTTLVIVLPAIAQLGRLSKAIDMHLYIVEKQFYL, GGKLGVALIDMYSKCGSIQHAMLVFEGIENK, SIDHWNAMIGGLAIHGLGESAFDMLLQIERLSLKP, DDITFVGVLNACSHSGLVKEGLLCFELMRRK, and RLQHYGCMVDILSRSGSIELAKNLIEEMPVE. Residues 521-596 form a type E motif region; that stretch reads IWRTFLTACS…IPGCSWIELD (76 aa).

Belongs to the PPR family. PCMP-E subfamily. In terms of assembly, interacts with DYW1.

The protein resides in the plastid. The protein localises to the chloroplast. In terms of biological role, plays a major role in chloroplast RNA editing. Acts as a site-recognition transacting factor to recruit C-deaminase. Involved in single RNA editing events. Required for the edition of the site 1 of ndhD (ndhD-1 site corresponding to cytidine-2), which is a plastid-encoded subunit of the NADH-plastoquinone oxidoreductase. The interaction with DYW1 is required for its function in editing the ndhD-1 site. The chain is Pentatricopeptide repeat-containing protein At2g45350, chloroplastic (CRR4) from Arabidopsis thaliana (Mouse-ear cress).